Consider the following 95-residue polypeptide: UPF0213 protein YPK_3712 (95 aa).

Residues 4–79 (SLWHLYLLRT…KQLSKQQKEK (76 aa)) enclose the GIY-YIG domain.

This sequence belongs to the UPF0213 family.

This chain is UPF0213 protein YPK_3712, found in Yersinia pseudotuberculosis serotype O:3 (strain YPIII).